The following is a 500-amino-acid chain: Na(+)/H(+) antiporter NhaB (500 aa).

A run of 12 helical transmembrane segments spans residues 28 to 50 (FLMLNALVLWSVGPVAAGWLLVI), 58 to 78 (MALKCYPLMPGGLLLIEALLL), 96 to 116 (VILLLMFMVAGIYFMKDLLLF), 129 to 149 (ALLALMFCFLSAFLSAFLDAL), 150 to 170 (TVTAVIISAAVGFYSVYHRVA), 205 to 225 (LLMHGAVGTALGGVCTLVGEP), 241 to 261 (FFLKVAPVSLPVLVAGLVTCL), 311 to 331 (ILIAGLAFHIAEVGLIGLMVI), 350 to 370 (FKDAMPFTALLVVFFAVVAVI), 394 to 414 (MLFIANGLLSAISDNVFVATI), 449 to 469 (VATPNGQAAFLFLLTSAIAPL), and 477 to 497 (MVWMALPYTVVMGLLGWYAVS).

Belongs to the NhaB Na(+)/H(+) (TC 2.A.34) antiporter family.

The protein localises to the cell inner membrane. It catalyses the reaction 2 Na(+)(in) + 3 H(+)(out) = 2 Na(+)(out) + 3 H(+)(in). Its function is as follows. Na(+)/H(+) antiporter that extrudes sodium in exchange for external protons. In Pseudomonas fluorescens (strain Pf0-1), this protein is Na(+)/H(+) antiporter NhaB.